Consider the following 346-residue polypeptide: Envelope glycoprotein M (346 aa).

Topologically, residues 1–12 are intravirion; that stretch reads MALSRVDVINMR. Residues 13–33 form a helical membrane-spanning segment; that stretch reads IWVLSIICACLTYVNVTVHLV. The Virion surface portion of the chain corresponds to 34–76; it reads AVHFPNLGFPCAYYEINDMKAINLSIRNDIRSLTPQLYLNPIQ. A helical membrane pass occupies residues 77 to 97; the sequence is LICYVVFMDICFFFILVYYIV. The Intravirion segment spans residues 98 to 117; the sequence is CCVKVFSSEKTPNINQSTRD. The chain crosses the membrane as a helical span at residues 118–140; the sequence is ITWMGDSLSCFQFVLTMDTYQFF. At 141–147 the chain is on the virion surface side; the sequence is VTCLSFR. The chain crosses the membrane as a helical span at residues 148 to 168; sequence LVTLAAFTYCLFFICFTAFTL. Over 169–199 the chain is Intravirion; that stretch reads TMITQYQSSERSFFVLKRIHPKLKGTIKYKT. A helical transmembrane segment spans residues 200–220; sequence IIINMIELMLGFSSMVFAITI. Topologically, residues 221-236 are virion surface; sequence CLGLGNNFYIKSSTVA. A helical transmembrane segment spans residues 237–257; it reads FASINTFFVMSFVYSLVIELI. The Intravirion portion of the chain corresponds to 258 to 263; sequence LHQYVK. Residues 264–284 form a helical membrane-spanning segment; the sequence is VQFGLHFGILFGILGLTYPIL. Residues 285–293 are Virion surface-facing; sequence KYDSLFKTE. Residues 294–314 form a helical membrane-spanning segment; the sequence is WTVKFIVNLAVITIVCLSFII. Residues 315–346 are Intravirion-facing; that stretch reads CRLIRFFMRKHHNYKKLPTTVEDLDVLEEANE.

It belongs to the herpesviridae glycoprotein M family. Interacts (via N-terminus) with gN (via N-terminus). The gM-gN heterodimer forms the gCII complex.

Its subcellular location is the virion membrane. It localises to the host Golgi apparatus. It is found in the host trans-Golgi network. The protein resides in the host endosome membrane. The protein localises to the host nucleus inner membrane. In terms of biological role, envelope glycoprotein important for virion assembly and egress. Plays a role in the correct incorporation of gH-gL into virion membrane. Directs the glycoprotein N (gN) to the host trans-Golgi network. This chain is Envelope glycoprotein M, found in Homo sapiens (Human).